A 140-amino-acid chain; its full sequence is Small ribosomal subunit protein uS19 (140 aa).

The interval 55-74 (LAEARESGTEETANNPIRTH) is disordered.

It belongs to the universal ribosomal protein uS19 family.

In terms of biological role, protein S19 forms a complex with S13 that binds strongly to the 16S ribosomal RNA. The chain is Small ribosomal subunit protein uS19 from Halobacterium salinarum (strain ATCC 29341 / DSM 671 / R1).